We begin with the raw amino-acid sequence, 296 residues long: tRNA dimethylallyltransferase (296 aa).

Position 2–9 (2–9 (GPTASGKT)) interacts with ATP. 4–9 (TASGKT) is a substrate binding site. Interaction with substrate tRNA regions lie at residues 27-30 (DSAL), 151-155 (QRLSR), and 232-237 (RCVGYR).

It belongs to the IPP transferase family. Monomer. Mg(2+) serves as cofactor.

It carries out the reaction adenosine(37) in tRNA + dimethylallyl diphosphate = N(6)-dimethylallyladenosine(37) in tRNA + diphosphate. Functionally, catalyzes the transfer of a dimethylallyl group onto the adenine at position 37 in tRNAs that read codons beginning with uridine, leading to the formation of N6-(dimethylallyl)adenosine (i(6)A). The sequence is that of tRNA dimethylallyltransferase from Shewanella woodyi (strain ATCC 51908 / MS32).